The primary structure comprises 180 residues: Large ribosomal subunit protein uL18m (180 aa).

It belongs to the universal ribosomal protein uL18 family. Component of the mitochondrial ribosome large subunit (39S) which comprises a 16S rRNA and about 50 distinct proteins.

It localises to the mitochondrion. In terms of biological role, together with thiosulfate sulfurtransferase (TST), acts as a mitochondrial import factor for the cytosolic 5S rRNA. The precursor form shows RNA chaperone activity; is able to fold the 5S rRNA into an import-competent conformation that is recognized by rhodanese (TST). Both the cytoplasmic and mitochondrial forms are able to bind to the helix IV-loop D in the gamma domain of the 5S rRNA. The polypeptide is Large ribosomal subunit protein uL18m (MRPL18) (Bos taurus (Bovine)).